The following is a 1096-amino-acid chain: MGVQGFQEFLEKRCPGAVVPVDLLKLARTVSRQQQQQHLHRQLPPTAALAPGAPRAARGSVPLQPPLPPAALGAYSGGAGPTRHHHPAHHFHHHGQAQPGLHPPLPPPPPPQLPGARVLVDAGSALPRLYGGYQTDWVCGGQWNAMLGYLSALCQACAYPGGDGLELVVMFPGGLGKDRLAEWGRRCQAERQTAQLIVGHVGNKGTPPPRAWFLPPACLSHCVRLALIRFRVKVFQSLEDHHLEVVAFFRENGFHGLLAHDSEYALYNIPSYYSSHALKLSWNGKNLTTNQFLMQEVAKQLGLKRMNFPIFAALLGNHILPDEDLAAFHWSLLGPEHPLASLKVRAHQLVLPPCDVVIKAVSEYVSSIKDPSNLDVVGKDVFKQSQSRTEDKIERFKKAVEYYSVTTKLSSLPVGPSFLGFRNNRLGNPPLPRNQVGTISAGKPMFSHQVPQKVKYPPPFPVGPNSSLLFSSHALGESHAFSEDPMLQNSPFANWAVSYDSSASQFPNYLPSKASPPLGPDSSHSSSSDGDEPNGASSDHITEAFHHQPEWGNPNRDRGSWAQPVDTGVSEASLGDGEPHIPSLLSMSTRNHMDITIPPLPPVAPEVLRVAEHRHRRGLMYPYIYHVLTKGEIKIPVCIEDECNMELPPAALLFRSARQYVYGVLFSLAETQRKMERLAMRRRLPVEVPSVILKEWSAYKGKSPQTPELVSALTFREWTCPNLKKLWLGKAVEDKNRRMRAFLACMKSDTPSMLNPANVPTHLLLMCCVLRYMVQWPGGRILHRHELDTFLAQAVSTQLYEPDRLQELKIEKLDARGIQLAALFMSGVDTALFANDACGQPVPWEHCCPWIYFDGKLFQSKLIKAGRERVSLVELCDGQADLATKVEKMRQSILEGVNMNHPPPSALLPSPTFVPPMVPSLYPVSLYSRAMGSMPLPPQGRSRGFAGLHPIPPQGGKLEIAGMVVGQWAGSRSSRGRGSFGMQVVSVGGPGKGHGKEQTGRGSKGHKKGNKQGSSDGVSKSLELHQGRSRSQVNGNSGALIKEEKSDHRLPAPSQCALSRDSNECNNGNRYLPMNNREKNHLQEQKLETVAQRKED.

Over residues 35 to 59 (QQQHLHRQLPPTAALAPGAPRAARG) the composition is skewed to low complexity. 3 disordered regions span residues 35-113 (QQQH…PPQL), 508-579 (NYLP…DGEP), and 971-1096 (SRSS…RKED). An Omega-N-methylarginine modification is found at Arg58. The span at 82–95 (TRHHHPAHHFHHHG) shows a compositional bias: basic residues. The segment covering 101–113 (LHPPLPPPPPPQL) has biased composition (pro residues). Over residues 540–559 (HITEAFHHQPEWGNPNRDRG) the composition is skewed to basic and acidic residues. The residue at position 977 (Arg977) is an Omega-N-methylarginine. 2 stretches are compositionally biased toward basic and acidic residues: residues 1041–1050 (IKEEKSDHRL) and 1076–1096 (NREKNHLQEQKLETVAQRKED). Lys1042 is covalently cross-linked (Glycyl lysine isopeptide (Lys-Gly) (interchain with G-Cter in SUMO2)).

It belongs to the constitutive coactivator of PPAR-gamma family. As to expression, expressed at low levels in a number of tissues.

The chain is Constitutive coactivator of PPAR-gamma-like protein 2 (FAM120C) from Homo sapiens (Human).